The sequence spans 447 residues: Glutamate-1-semialdehyde 2,1-aminomutase (447 aa).

Position 272 is an N6-(pyridoxal phosphate)lysine (K272).

The protein belongs to the class-III pyridoxal-phosphate-dependent aminotransferase family. HemL subfamily. In terms of assembly, homodimer. It depends on pyridoxal 5'-phosphate as a cofactor.

It localises to the cytoplasm. It carries out the reaction (S)-4-amino-5-oxopentanoate = 5-aminolevulinate. Its pathway is porphyrin-containing compound metabolism; protoporphyrin-IX biosynthesis; 5-aminolevulinate from L-glutamyl-tRNA(Glu): step 2/2. This is Glutamate-1-semialdehyde 2,1-aminomutase from Leifsonia xyli subsp. xyli (strain CTCB07).